Consider the following 477-residue polypeptide: Putative WAS protein family homolog 4 (477 aa).

The interval 1–180 (MSGVMCLKAS…EGLGGLPSNI (180 aa)) is WHD1. Disordered regions lie at residues 310 to 420 (QDGV…QGGH) and 434 to 477 (KGIS…DWES). The span at 315-327 (TPPPPPPPPPPAP) shows a compositional bias: pro residues. Residues 362–477 (QGAPREVVDP…QAEDEDDWES (116 aa)) are VCA. Residues 374–396 (GWATLLESIRQAGGIGKAKLRSM) enclose the WH2 domain. Over residues 395–411 (SMKERKLEKQQQKEQEQ) the composition is skewed to basic and acidic residues. A compositionally biased stretch (gly residues) spans 437–449 (SGKGPGAGDGPGG).

It belongs to the WASH1 family. In terms of assembly, interacts (via WHD1 region) with WASHC2C; the interaction is direct.

It localises to the early endosome membrane. It is found in the recycling endosome membrane. Its function is as follows. May act as a nucleation-promoting factor at the surface of endosomes, where it recruits and activates the Arp2/3 complex to induce actin polymerization, playing a key role in the fission of tubules that serve as transport intermediates during endosome sorting. In Homo sapiens (Human), this protein is Putative WAS protein family homolog 4 (WASH4P).